The following is a 706-amino-acid chain: Elongation factor G (706 aa).

The 277-residue stretch at 15–291 folds into the tr-type G domain; that stretch reads LKTRNIGISA…GVLDYLASPV (277 aa). Residues 24–31, 91–95, and 145–148 contribute to the GTP site; these read AHIDSGKT, DTPGH, and NKLD.

This sequence belongs to the TRAFAC class translation factor GTPase superfamily. Classic translation factor GTPase family. EF-G/EF-2 subfamily.

The protein resides in the cytoplasm. Catalyzes the GTP-dependent ribosomal translocation step during translation elongation. During this step, the ribosome changes from the pre-translocational (PRE) to the post-translocational (POST) state as the newly formed A-site-bound peptidyl-tRNA and P-site-bound deacylated tRNA move to the P and E sites, respectively. Catalyzes the coordinated movement of the two tRNA molecules, the mRNA and conformational changes in the ribosome. The protein is Elongation factor G of Leptospira interrogans serogroup Icterohaemorrhagiae serovar copenhageni (strain Fiocruz L1-130).